The sequence spans 129 residues: Calcitonin gene-related peptide 2 (129 aa).

The signal sequence occupies residues 1–25 (MGFGKPSSFLAFSILVLCQAGSLQA). Positions 26–81 (QPLRSSLESLPDPAALSEKEGRLLLAALVKAYVQRKTNELEQEQEQEMEGSSLTAQ) are excised as a propeptide. A disulfide bond links C85 and C90. At F120 the chain carries Phenylalanine amide. Positions 126–129 (DLQA) are excised as a propeptide.

Belongs to the calcitonin family.

The protein resides in the secreted. Its function is as follows. CALCB/CGRP2 is a peptide hormone that induces vasodilation mediated by the CALCRL-RAMP1 receptor complex. Dilates a variety of vessels including the coronary, cerebral and systemic vasculature. Its abundance in the CNS also points toward a neurotransmitter or neuromodulator role. In Equus caballus (Horse), this protein is Calcitonin gene-related peptide 2 (CALCB).